Here is a 96-residue protein sequence, read N- to C-terminus: uncharacterized protein (96 aa).

This is an uncharacterized protein from Saimiriine herpesvirus 2 (strain 11) (SaHV-2).